We begin with the raw amino-acid sequence, 220 residues long: Ribosomal RNA small subunit methyltransferase Nep1 (220 aa).

Residues glycine 178, glycine 183, and 196 to 201 each bind S-adenosyl-L-methionine; that span reads IYKEPL.

The protein belongs to the class IV-like SAM-binding methyltransferase superfamily. RNA methyltransferase NEP1 family. In terms of assembly, homodimer.

It catalyses the reaction a pseudouridine in rRNA + S-adenosyl-L-methionine = an N(1)-methylpseudouridine in rRNA + S-adenosyl-L-homocysteine + H(+). Methyltransferase involved in ribosomal biogenesis. Specifically catalyzes the N1-methylation of the pseudouridine corresponding to position 914 in M.jannaschii 16S rRNA. The chain is Ribosomal RNA small subunit methyltransferase Nep1 from Thermococcus sibiricus (strain DSM 12597 / MM 739).